Consider the following 135-residue polypeptide: Peptidyl-prolyl cis-trans isomerase FPR2 (135 aa).

The signal sequence occupies residues 1 to 17 (MMFNIYLFVTFFSTILA). In terms of domain architecture, PPIase FKBP-type spans 43-132 (GDKVKVHYTG…VFDVELVDVK (90 aa)).

The protein belongs to the FKBP-type PPIase family. FKBP2 subfamily.

Its subcellular location is the endoplasmic reticulum membrane. It catalyses the reaction [protein]-peptidylproline (omega=180) = [protein]-peptidylproline (omega=0). Inhibited by both FK506 and rapamycin. Binds FK506 with 15-fold lower affinity than FKB1. Its function is as follows. PPIases accelerate the folding of proteins. It catalyzes the cis-trans isomerization of proline imidic peptide bonds in oligopeptides. FKBP-13 may play a role in protein trafficking in the ER. In Saccharomyces cerevisiae (strain ATCC 204508 / S288c) (Baker's yeast), this protein is Peptidyl-prolyl cis-trans isomerase FPR2 (FPR2).